The following is a 212-amino-acid chain: Deoxyribose-phosphate aldolase (212 aa).

Asp90 (proton donor/acceptor) is an active-site residue. Catalysis depends on Lys151, which acts as the Schiff-base intermediate with acetaldehyde. The active-site Proton donor/acceptor is the Lys176.

This sequence belongs to the DeoC/FbaB aldolase family. DeoC type 1 subfamily.

Its subcellular location is the cytoplasm. The catalysed reaction is 2-deoxy-D-ribose 5-phosphate = D-glyceraldehyde 3-phosphate + acetaldehyde. It participates in carbohydrate degradation; 2-deoxy-D-ribose 1-phosphate degradation; D-glyceraldehyde 3-phosphate and acetaldehyde from 2-deoxy-alpha-D-ribose 1-phosphate: step 2/2. Catalyzes a reversible aldol reaction between acetaldehyde and D-glyceraldehyde 3-phosphate to generate 2-deoxy-D-ribose 5-phosphate. This Halobacterium salinarum (strain ATCC 29341 / DSM 671 / R1) protein is Deoxyribose-phosphate aldolase.